Reading from the N-terminus, the 151-residue chain is SsrA-binding protein (151 aa).

The protein belongs to the SmpB family.

It is found in the cytoplasm. Required for rescue of stalled ribosomes mediated by trans-translation. Binds to transfer-messenger RNA (tmRNA), required for stable association of tmRNA with ribosomes. tmRNA and SmpB together mimic tRNA shape, replacing the anticodon stem-loop with SmpB. tmRNA is encoded by the ssrA gene; the 2 termini fold to resemble tRNA(Ala) and it encodes a 'tag peptide', a short internal open reading frame. During trans-translation Ala-aminoacylated tmRNA acts like a tRNA, entering the A-site of stalled ribosomes, displacing the stalled mRNA. The ribosome then switches to translate the ORF on the tmRNA; the nascent peptide is terminated with the 'tag peptide' encoded by the tmRNA and targeted for degradation. The ribosome is freed to recommence translation, which seems to be the essential function of trans-translation. In Chlamydia muridarum (strain MoPn / Nigg), this protein is SsrA-binding protein.